A 155-amino-acid chain; its full sequence is Transcriptional repressor NrdR (155 aa).

A zinc finger spans residues 3 to 34 (CPFCHAEETKVVDSRLVADGAQVRRRRECLEC). Residues 49–139 (PLIIKRDGRR…VYKRFKDVSD (91 aa)) enclose the ATP-cone domain.

The protein belongs to the NrdR family. Zn(2+) serves as cofactor.

In terms of biological role, negatively regulates transcription of bacterial ribonucleotide reductase nrd genes and operons by binding to NrdR-boxes. The polypeptide is Transcriptional repressor NrdR (Legionella pneumophila (strain Paris)).